A 213-amino-acid chain; its full sequence is Alkylbase DNA glycosidase-like protein mag2 (213 aa).

Lys53, Leu54, Ser61, His91, Gly94, Ser96, Lys97, Lys99, Glu102, Lys137, Gly138, Lys140, Thr143, Ser163, and Thr164 together coordinate DNA.

The protein belongs to the alkylbase DNA glycosidase AlkA family.

It localises to the nucleus. Its function is as follows. Alkylbase DNA glycosidase-like protein that shows no DNA glycosylase activity for alkylated bases. The molecular role of mag2 appears to be abasic (AP) site recognition and protection, while possibly facilitating damage signaling by structurally sculpting the DNA substrate. Stimulates AP site binding to mismatch repair protein mutS. This Schizosaccharomyces pombe (strain 972 / ATCC 24843) (Fission yeast) protein is Alkylbase DNA glycosidase-like protein mag2.